A 1303-amino-acid chain; its full sequence is MPGPRGAAGGLAPEMRGAGAAGLLALLLLLLLLLLGLGGRVEGGPAGERGAGGGGALARERFKVVFAPVICKRTCLKGQCRDSCQQGSNMTLIGENGHSTDTLTGSGFRVVVCPLPCMNGGQCSSRNQCLCPPDFTGRFCQVPAGGAGGGTGGSGPGLSRTGALSTGALPPLAPEGDSVASKHAIYAVQVIADPPGPGEGPPAQHAAFLVPLGPGQISAEVQAPPPVVNVRVHHPPEASVQVHRIESSNAESAAPSQHLLPHPKPSHPRPPTQKPLGRCFQDTLPKQPCGSNPLPGLTKQEDCCGSIGTAWGQSKCHKCPQLQYTGVQKPGPVRGEVGADCPQGYKRLNSTHCQDINECAMPGVCRHGDCLNNPGSYRCVCPPGHSLGPSRTQCIADKPEEKSLCFRLVSPEHQCQHPLTTRLTRQLCCCSVGKAWGARCQRCPTDGTAAFKEICPAGKGYHILTSHQTLTIQGESDFSLFLHPDGPPKPQQLPESPSQAPPPEDTEEERGVTTDSPVSEERSVQQSHPTATTTPARPYPELISRPSPPTMRWFLPDLPPSRSAVEIAPTQVTETDECRLNQNICGHGECVPGPPDYSCHCNPGYRSHPQHRYCVDVNECEAEPCGPGRGICMNTGGSYNCHCNRGYRLHVGAGGRSCVDLNECAKPHLCGDGGFCINFPGHYKCNCYPGYRLKASRPPVCEDIDECRDPSSCPDGKCENKPGSFKCIACQPGYRSQGGGACRDVNECAEGSPCSPGWCENLPGSFRCTCAQGYAPAPDGRSCLDVDECEAGDVCDNGICSNTPGSFQCQCLSGYHLSRDRSHCEDIDECDFPAACIGGDCINTNGSYRCLCPQGHRLVGGRKCQDIDECSQDPSLCLPHGACKNLQGSYVCVCDEGFTPTQDQHGCEEVEQPHHKKECYLNFDDTVFCDSVLATNVTQQECCCSLGAGWGDHCEIYPCPVYSSAEFHSLCPDGKGYTQDNNIVNYGIPAHRDIDECMLFGSEICKEGKCVNTQPGYECYCKQGFYYDGNLLECVDVDECLDESNCRNGVCENTRGGYRCACTPPAEYSPAQRQCLSPEEMDVDECQDPAACRPGRCVNLPGSYRCECRPPWVPGPSGRDCQLPESPAERAPERRDVCWSQRGEDGMCAGPLAGPALTFDDCCCRQGRGWGAQCRPCPPRGAGSHCPTSQSESNSFWDTSPLLLGKPPRDEDSSEEDSDECRCVSGRCVPRPGGAVCECPGGFQLDASRARCVDIDECRELNQRGLLCKSERCVNTSGSFRCVCKAGFARSRPHGACVPQRRR.

The first 43 residues, 1–43 (MPGPRGAAGGLAPEMRGAGAAGLLALLLLLLLLLLGLGGRVEG), serve as a signal peptide directing secretion. N-linked (GlcNAc...) asparagine glycosylation is present at Asn89. Residues 109 to 141 (RVVVCPLPCMNGGQCSSRNQCLCPPDFTGRFCQ) form the EGF-like 1 domain. 6 disulfide bridges follow: Cys113–Cys123, Cys117–Cys129, Cys131–Cys140, Cys279–Cys303, Cys289–Cys316, and Cys304–Cys319. The segment at 247–282 (SSNAESAAPSQHLLPHPKPSHPRPPTQKPLGRCFQD) is disordered. The TB 1 domain maps to 277 to 331 (GRCFQDTLPKQPCGSNPLPGLTKQEDCCGSIGTAWGQSKCHKCPQLQYTGVQKPG). N-linked (GlcNAc...) asparagine glycosylation occurs at Asn349. Positions 355–395 (DINECAMPGVCRHGDCLNNPGSYRCVCPPGHSLGPSRTQCI) constitute an EGF-like 2; calcium-binding domain. Intrachain disulfides connect Cys359/Cys370, Cys365/Cys379, Cys381/Cys394, Cys405/Cys428, Cys415/Cys440, Cys429/Cys443, and Cys430/Cys455. The region spanning 403 to 455 (SLCFRLVSPEHQCQHPLTTRLTRQLCCCSVGKAWGARCQRCPTDGTAAFKEIC) is the TB 2 domain. A disordered region spans residues 478-552 (FSLFLHPDGP…ISRPSPPTMR (75 aa)). A compositionally biased stretch (low complexity) spans 529–540 (PTATTTPARPYP). The EGF-like 3 domain maps to 574 to 615 (ETDECRLNQNICGHGECVPGPPDYSCHCNPGYRSHPQHRYCV). 37 cysteine pairs are disulfide-bonded: Cys578–Cys590, Cys585–Cys599, Cys601–Cys614, Cys620–Cys632, Cys625–Cys641, Cys664–Cys676, Cys670–Cys685, Cys687–Cys701, Cys748–Cys759, Cys754–Cys768, Cys770–Cys783, Cys789–Cys800, Cys795–Cys809, Cys811–Cys824, Cys830–Cys841, Cys836–Cys850, Cys852–Cys864, Cys870–Cys883, Cys877–Cys892, Cys894–Cys907, Cys919–Cys942, Cys929–Cys954, Cys943–Cys959, Cys944–Cys971, Cys997–Cys1010, Cys1005–Cys1019, Cys1021–Cys1034, Cys1040–Cys1051, Cys1046–Cys1060, Cys1062–Cys1075, Cys1086–Cys1097, Cys1092–Cys1106, Cys1108–Cys1121, Cys1138–Cys1162, Cys1148–Cys1174, Cys1163–Cys1177, and Cys1164–Cys1186. One can recognise an EGF-like 4; calcium-binding domain in the interval 616–659 (DVNECEAEPCGPGRGICMNTGGSYNCHCNRGYRLHVGAGGRSCV). The EGF-like 5; calcium-binding domain occupies 660–702 (DLNECAKPHLCGDGGFCINFPGHYKCNCYPGYRLKASRPPVCE). In terms of domain architecture, EGF-like 6; calcium-binding spans 744 to 784 (DVNECAEGSPCSPGWCENLPGSFRCTCAQGYAPAPDGRSCL). The EGF-like 7; calcium-binding domain occupies 785–825 (DVDECEAGDVCDNGICSNTPGSFQCQCLSGYHLSRDRSHCE). The 40-residue stretch at 826–865 (DIDECDFPAACIGGDCINTNGSYRCLCPQGHRLVGGRKCQ) folds into the EGF-like 8; calcium-binding domain. N-linked (GlcNAc...) asparagine glycosylation occurs at Asn845. One can recognise an EGF-like 9; calcium-binding domain in the interval 866–908 (DIDECSQDPSLCLPHGACKNLQGSYVCVCDEGFTPTQDQHGCE). The TB 3 domain maps to 917 to 971 (KECYLNFDDTVFCDSVLATNVTQQECCCSLGAGWGDHCEIYPCPVYSSAEFHSLC). The N-linked (GlcNAc...) asparagine glycan is linked to Asn936. Residues 993 to 1035 (DIDECMLFGSEICKEGKCVNTQPGYECYCKQGFYYDGNLLECV) enclose the EGF-like 10; calcium-binding domain. The region spanning 1036–1076 (DVDECLDESNCRNGVCENTRGGYRCACTPPAEYSPAQRQCL) is the EGF-like 11; calcium-binding domain. One can recognise an EGF-like 12; calcium-binding domain in the interval 1082–1122 (DVDECQDPAACRPGRCVNLPGSYRCECRPPWVPGPSGRDCQ). One can recognise a TB 4 domain in the interval 1136–1186 (DVCWSQRGEDGMCAGPLAGPALTFDDCCCRQGRGWGAQCRPCPPRGAGSHC). Positions 1188 to 1198 (TSQSESNSFWD) are enriched in polar residues. Residues 1188-1219 (TSQSESNSFWDTSPLLLGKPPRDEDSSEEDSD) are disordered. The 45-residue stretch at 1254–1298 (DIDECRELNQRGLLCKSERCVNTSGSFRCVCKAGFARSRPHGACV) folds into the EGF-like 13; calcium-binding domain. Disulfide bonds link Cys1258/Cys1273 and Cys1268/Cys1282. Asn1275 is a glycosylation site (N-linked (GlcNAc...) asparagine).

Belongs to the LTBP family. In terms of assembly, forms part of the large latent transforming growth factor beta precursor complex; removal is essential for activation of complex. Interacts with EFEMP2. In terms of processing, contains hydroxylated asparagine residues. Two intrachain disulfide bonds from the TB3 domain are rearranged upon TGFB1 binding, and form interchain bonds with TGFB1 propeptide, anchoring it to the extracellular matrix. Isoform 2: Expressed prominently in heart, skeletal muscle, prostate, testis, small intestine and ovary. Isoform 1: Strongly expressed in pancreas and liver.

The protein resides in the secreted. Its subcellular location is the extracellular space. The protein localises to the extracellular matrix. Key regulator of transforming growth factor beta (TGFB1, TGFB2 and TGFB3) that controls TGF-beta activation by maintaining it in a latent state during storage in extracellular space. Associates specifically via disulfide bonds with the Latency-associated peptide (LAP), which is the regulatory chain of TGF-beta, and regulates integrin-dependent activation of TGF-beta. This is Latent-transforming growth factor beta-binding protein 3 (LTBP3) from Homo sapiens (Human).